Consider the following 67-residue polypeptide: Small ribosomal subunit protein eS27 (67 aa).

Positions 22, 25, 41, and 44 each coordinate Zn(2+). The C4-type zinc finger occupies 22–44; the sequence is CPDCGNEQVTFSHAAMVVRCLVC.

It belongs to the eukaryotic ribosomal protein eS27 family. Part of the 30S ribosomal subunit. Requires Zn(2+) as cofactor.

This is Small ribosomal subunit protein eS27 from Pyrobaculum neutrophilum (strain DSM 2338 / JCM 9278 / NBRC 100436 / V24Sta) (Thermoproteus neutrophilus).